Reading from the N-terminus, the 282-residue chain is Bifunctional protein FolD (282 aa).

Position 163–165 (163–165 (GRS)) interacts with NADP(+).

It belongs to the tetrahydrofolate dehydrogenase/cyclohydrolase family. Homodimer.

It carries out the reaction (6R)-5,10-methylene-5,6,7,8-tetrahydrofolate + NADP(+) = (6R)-5,10-methenyltetrahydrofolate + NADPH. The enzyme catalyses (6R)-5,10-methenyltetrahydrofolate + H2O = (6R)-10-formyltetrahydrofolate + H(+). Its pathway is one-carbon metabolism; tetrahydrofolate interconversion. In terms of biological role, catalyzes the oxidation of 5,10-methylenetetrahydrofolate to 5,10-methenyltetrahydrofolate and then the hydrolysis of 5,10-methenyltetrahydrofolate to 10-formyltetrahydrofolate. In Leuconostoc citreum (strain KM20), this protein is Bifunctional protein FolD.